Reading from the N-terminus, the 192-residue chain is Potassium-transporting ATPase KdpC subunit (192 aa).

A helical membrane pass occupies residues 7 to 27; that stretch reads PLIVLFVVLAALTGLAYPAVM.

It belongs to the KdpC family. In terms of assembly, the system is composed of three essential subunits: KdpA, KdpB and KdpC.

The protein localises to the cell inner membrane. Functionally, part of the high-affinity ATP-driven potassium transport (or Kdp) system, which catalyzes the hydrolysis of ATP coupled with the electrogenic transport of potassium into the cytoplasm. This subunit acts as a catalytic chaperone that increases the ATP-binding affinity of the ATP-hydrolyzing subunit KdpB by the formation of a transient KdpB/KdpC/ATP ternary complex. This is Potassium-transporting ATPase KdpC subunit from Paraburkholderia xenovorans (strain LB400).